Consider the following 559-residue polypeptide: Oxygen-dependent choline dehydrogenase (559 aa).

4-33 (DYIIIGAGSAGNVLATRLTEDSDVTVLLLE) contributes to the FAD binding site. The Proton acceptor role is filled by His-473.

It belongs to the GMC oxidoreductase family. FAD serves as cofactor.

It carries out the reaction choline + A = betaine aldehyde + AH2. The catalysed reaction is betaine aldehyde + NAD(+) + H2O = glycine betaine + NADH + 2 H(+). The protein operates within amine and polyamine biosynthesis; betaine biosynthesis via choline pathway; betaine aldehyde from choline (cytochrome c reductase route): step 1/1. Its function is as follows. Involved in the biosynthesis of the osmoprotectant glycine betaine. Catalyzes the oxidation of choline to betaine aldehyde and betaine aldehyde to glycine betaine at the same rate. This chain is Oxygen-dependent choline dehydrogenase, found in Cronobacter sakazakii (strain ATCC BAA-894) (Enterobacter sakazakii).